The following is a 236-amino-acid chain: 15,16-dihydrobiliverdin:ferredoxin oxidoreductase (236 aa).

The protein belongs to the HY2 family.

The enzyme catalyses 15,16-dihydrobiliverdin + oxidized 2[4Fe-4S]-[ferredoxin] = biliverdin IXalpha + reduced 2[4Fe-4S]-[ferredoxin] + 2 H(+). Catalyzes the two-electron reduction of biliverdin IX-alpha at the C15 methine bridge. This Prochlorococcus marinus (strain MIT 9515) protein is 15,16-dihydrobiliverdin:ferredoxin oxidoreductase.